Here is a 203-residue protein sequence, read N- to C-terminus: Large ribosomal subunit protein bL25 (203 aa).

Belongs to the bacterial ribosomal protein bL25 family. CTC subfamily. As to quaternary structure, part of the 50S ribosomal subunit; part of the 5S rRNA/L5/L18/L25 subcomplex. Contacts the 5S rRNA. Binds to the 5S rRNA independently of L5 and L18.

In terms of biological role, this is one of the proteins that binds to the 5S RNA in the ribosome where it forms part of the central protuberance. The protein is Large ribosomal subunit protein bL25 of Rickettsia rickettsii (strain Iowa).